A 29-amino-acid polypeptide reads, in one-letter code: NADH dehydrogenase [ubiquinone] 1 beta subcomplex subunit 10 (29 aa).

The tract at residues 1–29 is disordered; the sequence is GRKKGVQFDEGAPDDFDPNNPYKKDVAFL.

This sequence belongs to the complex I NDUFB10 subunit family. Complex I is composed of about 45 different subunits.

Its subcellular location is the mitochondrion inner membrane. Functionally, accessory subunit of the mitochondrial membrane respiratory chain NADH dehydrogenase (Complex I), that is believed not to be involved in catalysis. Complex I functions in the transfer of electrons from NADH to the respiratory chain. The immediate electron acceptor for the enzyme is believed to be ubiquinone. This Solanum tuberosum (Potato) protein is NADH dehydrogenase [ubiquinone] 1 beta subcomplex subunit 10.